Consider the following 141-residue polypeptide: Large ribosomal subunit protein uL16 (141 aa).

The interval Met1–Ala21 is disordered.

This sequence belongs to the universal ribosomal protein uL16 family. As to quaternary structure, part of the 50S ribosomal subunit.

Its function is as follows. Binds 23S rRNA and is also seen to make contacts with the A and possibly P site tRNAs. This chain is Large ribosomal subunit protein uL16, found in Roseiflexus castenholzii (strain DSM 13941 / HLO8).